The primary structure comprises 492 residues: Malonyl-CoA decarboxylase, mitochondrial (492 aa).

The transit peptide at 1–38 (MRGLGPSLRARRLLPLRYPPRPPGPRGPRLCSGLTASA) directs the protein to the mitochondrion. The interval 39-189 (MDELLRRAVP…VLKSMLSEWF (151 aa)) is alpha-helical domain. K58 carries the N6-acetyllysine modification. K167 is modified (N6-acetyllysine; alternate). Position 167 is an N6-succinyllysine; alternate (K167). The segment at 190–492 (SSGFLNLERV…VAQFQSNSKL (303 aa)) is catalytic domain. K210 is subject to N6-acetyllysine. K221 is subject to N6-succinyllysine. 298–304 (QGVELGT) contributes to the malonyl-CoA binding site. K316 is subject to N6-acetyllysine. Malonyl-CoA is bound at residue S328. The Proton acceptor role is filled by S328. Residue K385 is modified to N6-acetyllysine; alternate. Position 385 is an N6-succinyllysine; alternate (K385). K388 carries the N6-acetyllysine modification. Residue H422 participates in malonyl-CoA binding. H422 functions as the Proton donor in the catalytic mechanism. An N6-acetyllysine mark is found at K441 and K471. The Microbody targeting signal motif lies at 490–492 (SKL).

As to quaternary structure, homotetramer. Dimer of dimers. The two subunits within a dimer display conformational differences suggesting that at any given moment, only one of the two subunits is competent for malonyl-CoA binding and catalytic activity. Under oxidizing conditions, can form disulfide-linked homotetramers (in vitro). Associates with the peroxisomal targeting signal receptor PEX5. Post-translationally, acetylation at Lys-471 activates malonyl-CoA decarboxylase activity. Deacetylation at Lys-471 by SIRT4 represses activity, leading to promote lipogenesis. Interchain disulfide bonds may form in peroxisomes (Potential). Interchain disulfide bonds are not expected to form in the reducing environment of the cytoplasm and mitochondria. Expressed in liver, heart, skeletal muscles and adipose tissues (at protein level). Ubiquitous. Strongly expressed in liver, kidney, heart, skeletal muscle and adipose tissues. Weakly expressed in brain.

The protein localises to the cytoplasm. The protein resides in the mitochondrion matrix. It is found in the peroxisome. Its subcellular location is the peroxisome matrix. The enzyme catalyses malonyl-CoA + H(+) = acetyl-CoA + CO2. Its pathway is metabolic intermediate biosynthesis; acetyl-CoA biosynthesis; acetyl-CoA from malonyl-CoA: step 1/1. Its activity is regulated as follows. Malonyl-CoA decarboxylase activity does not require any cofactors or divalent metal ions. In terms of biological role, catalyzes the conversion of malonyl-CoA to acetyl-CoA. In the fatty acid biosynthesis MCD selectively removes malonyl-CoA and thus assures that methyl-malonyl-CoA is the only chain elongating substrate for fatty acid synthase and that fatty acids with multiple methyl side chains are produced. In peroxisomes it may be involved in degrading intraperoxisomal malonyl-CoA, which is generated by the peroxisomal beta-oxidation of odd chain-length dicarboxylic fatty acids. Plays a role in the metabolic balance between glucose and lipid oxidation in muscle independent of alterations in insulin signaling. May play a role in controlling the extent of ischemic injury by promoting glucose oxidation. This Rattus norvegicus (Rat) protein is Malonyl-CoA decarboxylase, mitochondrial.